Here is a 248-residue protein sequence, read N- to C-terminus: Deoxyribose-phosphate aldolase (248 aa).

Asp-106 serves as the catalytic Proton donor/acceptor. Lys-168 (schiff-base intermediate with acetaldehyde) is an active-site residue. Lys-197 (proton donor/acceptor) is an active-site residue.

It belongs to the DeoC/FbaB aldolase family. DeoC type 1 subfamily.

Its subcellular location is the cytoplasm. It carries out the reaction 2-deoxy-D-ribose 5-phosphate = D-glyceraldehyde 3-phosphate + acetaldehyde. It participates in carbohydrate degradation; 2-deoxy-D-ribose 1-phosphate degradation; D-glyceraldehyde 3-phosphate and acetaldehyde from 2-deoxy-alpha-D-ribose 1-phosphate: step 2/2. Its function is as follows. Catalyzes a reversible aldol reaction between acetaldehyde and D-glyceraldehyde 3-phosphate to generate 2-deoxy-D-ribose 5-phosphate. The protein is Deoxyribose-phosphate aldolase of Rhizobium meliloti (strain 1021) (Ensifer meliloti).